The following is a 1004-amino-acid chain: UPF0182 protein Noca_1530 (1004 aa).

The tract at residues 1-20 (MSELFDEAPRDPGPPARSGS) is disordered. 7 helical membrane passes run 26–46 (LIVT…FAGI), 71–91 (VLFF…IYLA), 120–140 (TWLL…SAIG), 183–203 (MAVL…YGGI), 212–232 (LSGA…LAKA), 261–281 (VLPA…LFFV), and 293–313 (VGLA…PGIV). Disordered regions lie at residues 899–924 (GVST…PPAT) and 974–1004 (LGQK…SPSS). Low complexity-rich tracts occupy residues 903–916 (GPGT…QPGD) and 979–1004 (GSAG…SPSS).

It belongs to the UPF0182 family.

It is found in the cell membrane. In Nocardioides sp. (strain ATCC BAA-499 / JS614), this protein is UPF0182 protein Noca_1530.